Reading from the N-terminus, the 2137-residue chain is Autophagy-related protein 2 (2137 aa).

Disordered stretches follow at residues 108–137 (FGAAKDENPNSRRPSQAGTHDSSSDHILPT), 296–325 (PPTSPTTPVQPKSSEPSSRIPSPLPGQASD), 339–384 (EPSQ…GYLE), 410–531 (LHDD…NGGE), 612–640 (ALTEKRSFGEQSECPSEAREPDLTPLSPT), and 666–749 (DRRH…KSQP). 2 stretches are compositionally biased toward polar residues: residues 118 to 128 (SRRPSQAGTHD) and 301 to 315 (TTPVQPKSSEPSSRI). Over residues 413–423 (DDLEPPEDLVP) the composition is skewed to acidic residues. Over residues 429–440 (PPSSETLRSQTP) the composition is skewed to polar residues. Residues 488-505 (TPDVSHSASSPSGSLPSR) show a composition bias toward low complexity. The span at 510-526 (RQTAPPSESGSVGSSDV) shows a compositional bias: polar residues. Over residues 666–675 (DRRHTDETVR) the composition is skewed to basic and acidic residues. Residues 696–706 (SSTESELLSST) are compositionally biased toward low complexity.

This sequence belongs to the ATG2 family.

The protein resides in the preautophagosomal structure membrane. It localises to the endoplasmic reticulum membrane. The catalysed reaction is a 1,2-diacyl-sn-glycero-3-phosphocholine(in) = a 1,2-diacyl-sn-glycero-3-phosphocholine(out). It carries out the reaction a 1,2-diacyl-sn-glycero-3-phospho-L-serine(in) = a 1,2-diacyl-sn-glycero-3-phospho-L-serine(out). It catalyses the reaction a 1,2-diacyl-sn-glycero-3-phosphoethanolamine(in) = a 1,2-diacyl-sn-glycero-3-phosphoethanolamine(out). Functionally, lipid transfer protein required for autophagosome completion and peroxisome degradation. Tethers the edge of the isolation membrane (IM) to the endoplasmic reticulum (ER) and mediates direct lipid transfer from ER to IM for IM expansion. Atg2 binds to the ER exit site (ERES), which is the membrane source for autophagosome formation, using basic residues in its N-terminal region (NR) and to the expanding edge of the IM through its C-terminal region. The latter binding is assisted by an atg18-PtdIns3P interaction. Atg2 then extracts phospholipids from the membrane source using its NR and transfers them to atg9 to the IM through its predicted beta-sheet-rich structure for membrane expansion. This chain is Autophagy-related protein 2 (atg2), found in Neosartorya fischeri (strain ATCC 1020 / DSM 3700 / CBS 544.65 / FGSC A1164 / JCM 1740 / NRRL 181 / WB 181) (Aspergillus fischerianus).